The following is a 197-amino-acid chain: Imidazoleglycerol-phosphate dehydratase (197 aa).

Belongs to the imidazoleglycerol-phosphate dehydratase family.

It is found in the cytoplasm. It carries out the reaction D-erythro-1-(imidazol-4-yl)glycerol 3-phosphate = 3-(imidazol-4-yl)-2-oxopropyl phosphate + H2O. It functions in the pathway amino-acid biosynthesis; L-histidine biosynthesis; L-histidine from 5-phospho-alpha-D-ribose 1-diphosphate: step 6/9. This chain is Imidazoleglycerol-phosphate dehydratase, found in Clostridium acetobutylicum (strain ATCC 824 / DSM 792 / JCM 1419 / IAM 19013 / LMG 5710 / NBRC 13948 / NRRL B-527 / VKM B-1787 / 2291 / W).